The primary structure comprises 134 residues: MDFWKFFPFLALSSMWVLCLASSLQAAPFRSALESSLDLGTLSDQEKHLLLAALIQDYEQKARKLEQEEQETEGSRKGSSSSVISQKRSCNTATCVTHRLAGLLRRSGGVVKDNFVPTNVGSKAFGRRRRDLRV.

A signal peptide spans 1-26; it reads MDFWKFFPFLALSSMWVLCLASSLQA. A propeptide spanning residues 27-86 is cleaved from the precursor; sequence APFRSALESSLDLGTLSDQEKHLLLAALIQDYEQKARKLEQEEQETEGSRKGSSSSVISQ. The segment at 65-91 is disordered; it reads LEQEEQETEGSRKGSSSSVISQKRSCN. Over residues 77–89 the composition is skewed to low complexity; the sequence is KGSSSSVISQKRS. C90 and C95 are disulfide-bonded. Residue F125 is modified to Phenylalanine amide. Residues 131–134 constitute a propeptide that is removed on maturation; sequence DLRV.

This sequence belongs to the calcitonin family.

It is found in the secreted. CALCB/CGRP2 is a peptide hormone that induces vasodilation mediated by the CALCRL-RAMP1 receptor complex. Dilates a variety of vessels including the coronary, cerebral and systemic vasculature. Its abundance in the CNS also points toward a neurotransmitter or neuromodulator role. This Rattus norvegicus (Rat) protein is Calcitonin gene-related peptide 2.